A 341-amino-acid chain; its full sequence is Eukaryotic translation initiation factor 2 subunit 1 (341 aa).

The 72-residue stretch at 18–89 folds into the S1 motif domain; sequence NELVMVRIES…DKGYIDLSKR (72 aa). The segment at 301–341 is disordered; it reads LMEQLEVENQDGDGEEHEDDDDDDDDEEEEEKPKEKKSSRK. Residues 303–330 are compositionally biased toward acidic residues; sequence EQLEVENQDGDGEEHEDDDDDDDDEEEE. A compositionally biased stretch (basic and acidic residues) spans 331–341; that stretch reads EKPKEKKSSRK.

It belongs to the eIF-2-alpha family. As to quaternary structure, eukaryotic translation initiation factor 2 eIF2 is a heterotrimeric complex composed of an alpha, a beta and a gamma subunit.

It localises to the cytoplasm. Its subcellular location is the cytosol. Functionally, eIF-2 functions in the early steps of protein synthesis by forming a ternary complex with GTP and initiator tRNA. This complex binds to a 40S ribosomal subunit, followed by mRNA binding to form a 43S pre-initiation complex. Junction of the 60S ribosomal subunit to form the 80S initiation complex is preceded by hydrolysis of the GTP bound to eIF-2 and release of an eIF-2-GDP binary complex. In order for eIF-2 to recycle and catalyze another round of initiation, the GDP bound to eIF-2 must exchange with GTP by way of a reaction catalyzed by eIF2B. The protein is Eukaryotic translation initiation factor 2 subunit 1 (eif2s1) of Dictyostelium discoideum (Social amoeba).